Reading from the N-terminus, the 1609-residue chain is MKIPHVTDPVSNMVGGMAQVVRASTHAATGAVNTMQMLASPVAEFAWPVVQSVAKSTGRALGTGHSPNFANRVDPPVRWHNGQRVHLDLDPLLPFPRWHEYAAVVEEPVRRIPGVAKGHVEGSLGRLVIELDKNADSDVVLGKVRDVVIALAADLALTGARSAPKVAPFADPGNPLAILMPLTAAVMDLVALSAAVTGWVTRLPAVPQTIRAAAALVNHQPRMVSLLESRLGRVGTDIALSITTAAASGLTQAVGTPLLDLACRGLQLSEAAAHQRVWRDREPQLASPKRPQAPVVPVISSAGEKSHAAGHNWTAAASNEASHLVVGGSIDAAIDTAKGSMKGPVESYVDSAANGSLIAAASALLAGGGTEDAAGAILAGVPRAAHMGQQAFAATLGRGLANAGQLVLDPGALRRLDQVKVVVIDGAALRGDHRAVLLARGNTPGWDDDRVYEVTDALLHGERAPEPDPDESPATGARLRWVPLQGPSATPVQGREHADLVVNGECVGGVDVGWEVDPYAIPLLQTAHRTGARVVLRHVAGTEDLSASVGATHPPGTPLLKLVRELRTDRGPVLLITAVHRDFASTDTLAALAIADVGVALDDPHAATPWTADIITGTDLAAAVRILSALPVARSASESSVHLAQGGTTLAGLLLITASAGSKSASPITLRRWFSPVNAAAATALVTGVVSASKVLRLPDPTPQPLTAWHALDPEIVYSRLAGVTQPLAVEPGTPDWRRRLDDLSYTRALSPLRKPVTKLARLASATRQEFADPLTPILAVGAAASAIVGSNIDALLVAGVMTVNAITGGVQRLRAEAAAAELFAEQDQLVRRVVVPAVATTRRRLEAAQHATRTVTVSAKSLRAGDVIDLAAPEVVPADARVLVAEDLEVDESLLTGESLPVDKRVDPVAINDADRASMLFEGSAIVAGHARAIVVATGVGTAAHRAISAVADVEVSAGVQARLRELTSKVLPLTLAGGAAVTGLALLRRASLRQAVADGVAIAVAAVPEGLPLVATLSQLAAAQRLTAKGALVRSPRTIEALGRVDTICFDKTGTLTENRLRVVCAVPNTRMPHDPLPDITDPHSAAVLRDAARASTQPHDGQGHTHATDEAILTAASSLNSHTDSTWSLIAEVPFESSRGYAAAIGITGNGKAPMLMLKGAPEKILPRCRFADPEADVAHAESLVRHLAEQGLRVLAVAQCSWGHDTTDDNDTDADAVDAAAHDLELVGYIGLADTARPSSRPLIEALVTAGRNVVLITGDHPITARAIAQQLGLRSDARVVNGTELIGLDEDACAELAADVQVFARVSPEQKVQIVAALQRCGQVTAMVGDGANDAAAIRMADVGIGVSGRGSSAARGAADIVLTDDDLGVLLDALVEGRSMWAGVRDAVTILVGGNVGEVVFTIIGTVFGAGRAPVGTRQLLLVNLLTDMFPALSIAVTSQYEEPGEDEYQTDEEADEARRTHQHEVLTGPTPSLDAPLMRQIVNRGVVTAAGATTAWAIGRWTPGTERRTATMGLTALVTTQLAQTLLTRRHSPLVVATALGSAGVLIGIIQTPVISQFFGCTPLGPIAWSGVITATAGATAVSVLAPQWLNKAFGIAQLNQE.

Helical transmembrane passes span 30 to 50, 176 to 196, 238 to 258, 357 to 377, 641 to 661, 673 to 693, 778 to 798, 921 to 941, 969 to 989, and 997 to 1017; these read GAVN…WPVV, LAIL…SAAV, IALS…GTPL, LIAA…AGAI, VHLA…ASAG, WFSP…VSAS, ILAV…ALLV, LFEG…ATGV, TSKV…LALL, and AVAD…PLVA. Catalysis depends on Asp1053, which acts as the 4-aspartylphosphate intermediate. Mg(2+)-binding residues include Asp1335 and Asp1339. Transmembrane regions (helical) follow at residues 1396–1416 and 1426–1446; these read ILVG…VFGA and LLLV…VTSQ. The segment at 1447–1476 is disordered; sequence YEEPGEDEYQTDEEADEARRTHQHEVLTGP. A compositionally biased stretch (acidic residues) spans 1449-1462; it reads EPGEDEYQTDEEAD. The next 2 membrane-spanning stretches (helical) occupy residues 1542 to 1562 and 1573 to 1593; these read VVAT…TPVI and PIAW…SVLA.

The protein belongs to the cation transport ATPase (P-type) (TC 3.A.3) family.

The protein localises to the cell membrane. The enzyme catalyses ATP + H2O = ADP + phosphate + H(+). This is Probable cation-transporting ATPase I (ctpI) from Mycobacterium leprae (strain TN).